A 349-amino-acid chain; its full sequence is Green-sensitive opsin-2 (349 aa).

Topologically, residues Met-1–Gln-36 are extracellular. N-linked (GlcNAc...) asparagine glycans are attached at residues Asn-2 and Asn-15. The chain crosses the membrane as a helical span at residues Phe-37–Val-61. Residues Thr-62 to Asn-73 lie on the Cytoplasmic side of the membrane. A helical membrane pass occupies residues Tyr-74 to Ile-99. Residues Asn-100–Glu-113 lie on the Extracellular side of the membrane. A disulfide bridge connects residues Cys-110 and Cys-187. A helical transmembrane segment spans residues Gly-114–Ile-133. Residues Glu-134–His-152 lie on the Cytoplasmic side of the membrane. Residues Ala-153 to Ser-176 traverse the membrane as a helical segment. Residues Arg-177–Ser-202 lie on the Extracellular side of the membrane. Asn-200 carries an N-linked (GlcNAc...) asparagine glycan. Residues Tyr-203 to Val-230 form a helical membrane-spanning segment. The Cytoplasmic segment spans residues Lys-231–Arg-252. Residues Met-253–Phe-276 form a helical membrane-spanning segment. Topologically, residues Phe-277 to Ser-284 are extracellular. The chain crosses the membrane as a helical span at residues Ala-285–Leu-309. At Lys-296 the chain carries N6-(retinylidene)lysine. Residues Asn-310 to Ala-349 lie on the Cytoplasmic side of the membrane. The interval Leu-328 to Ala-349 is disordered. A compositionally biased stretch (low complexity) spans Ser-334–Ala-349.

This sequence belongs to the G-protein coupled receptor 1 family. Opsin subfamily. Post-translationally, phosphorylated on some or all of the serine and threonine residues present in the C-terminal region.

The protein resides in the membrane. Visual pigments are the light-absorbing molecules that mediate vision. They consist of an apoprotein, opsin, covalently linked to cis-retinal. The chain is Green-sensitive opsin-2 (opn1mw2) from Danio rerio (Zebrafish).